The sequence spans 537 residues: 4-coumarate--CoA ligase (537 aa).

ATP-binding residues include Ser-189, Ser-190, Gly-191, Thr-192, Thr-193, and Lys-197. The (E)-4-coumaroyl-AMP site is built by Tyr-239 and Ser-243. Residue Lys-260 participates in CoA binding. An SBD1 region spans residues 262–331 (NLTTCLELIQ…ERFPKAIFGQ (70 aa)). (E)-4-coumaroyl-AMP-binding residues include Ala-309, Gln-331, Gly-332, Thr-336, and Met-344. Gln-331, Gly-332, and Thr-336 together coordinate ATP. Residues 332–399 (GYGMTEAGPV…IRGPEIMKGY (68 aa)) are SBD2. Residues Asp-420 and Arg-435 each contribute to the ATP site. (E)-4-coumaroyl-AMP contacts are provided by Lys-437 and Lys-441. CoA-binding residues include Lys-443 and Gly-444. Lys-524 contributes to the ATP binding site.

It belongs to the ATP-dependent AMP-binding enzyme family. Mg(2+) is required as a cofactor.

It carries out the reaction (E)-4-coumarate + ATP + CoA = (E)-4-coumaroyl-CoA + AMP + diphosphate. It catalyses the reaction (E)-4-coumarate + ATP + H(+) = (E)-4-coumaroyl-AMP + diphosphate. The enzyme catalyses (E)-4-coumaroyl-AMP + CoA = (E)-4-coumaroyl-CoA + AMP + H(+). The protein operates within phytoalexin biosynthesis; 3,4',5-trihydroxystilbene biosynthesis; 3,4',5-trihydroxystilbene from trans-4-coumarate: step 1/2. Functionally, carboxylate--CoA ligase that may use 4-coumarate as substrate. Follows a two-step reaction mechanism, wherein the carboxylate substrate first undergoes adenylation by ATP, followed by a thioesterification in the presence of CoA to yield the final CoA thioester. In Pinus taeda (Loblolly pine), this protein is 4-coumarate--CoA ligase (4CL).